The primary structure comprises 167 residues: uncharacterized protein (167 aa).

Residues 5 to 27 (LILLTFVSFVFSKTFYYDVYVFF) form a helical membrane-spanning segment.

The protein resides in the membrane. This is an uncharacterized protein from Aquifex aeolicus (strain VF5).